We begin with the raw amino-acid sequence, 215 residues long: L-fuculose phosphate aldolase (215 aa).

Residues 28–29, 43–44, and 71–72 each bind substrate; these read GN, TG, and SS. Catalysis depends on E73, which acts as the Proton donor/acceptor. Residues E73, H92, H94, and H155 each contribute to the Zn(2+) site.

Belongs to the aldolase class II family. AraD/FucA subfamily. In terms of assembly, homotetramer. Zn(2+) serves as cofactor.

The catalysed reaction is L-fuculose 1-phosphate = (S)-lactaldehyde + dihydroxyacetone phosphate. The protein operates within carbohydrate degradation; L-fucose degradation; L-lactaldehyde and glycerone phosphate from L-fucose: step 3/3. Inhibited by phosphoglycolohydroxamate (PGH). Its function is as follows. Involved in the degradation of L-fucose and D-arabinose. Catalyzes the reversible cleavage of L-fuculose 1-phosphate (Fuc1P) to yield dihydroxyacetone phosphate (DHAP) and L-lactaldehyde. Also able to catalyze the reversible cleavage of D-ribulose 1-phosphate, but FucA has a higher affinity for L-fuculose 1-phosphate and L-lactaldehyde than for D-ribulose 1-phosphate and glycolaldehyde, respectively. FucA possesses a high specificity for the dihydroxyacetone phosphate (DHAP), but accepts a great variety of different aldehydes and has a strong preference for L-configurated alpha-hydroxy aldehydes. FucA generates a vicinal diol unit having the absolute (3R,4R)-cis configuration (D-erythro). This Escherichia coli (strain K12) protein is L-fuculose phosphate aldolase.